Consider the following 827-residue polypeptide: Glycerol-3-phosphate acyltransferase (827 aa).

The short motif at 325–330 is the HXXXXD motif element; it reads CHRSHM.

This sequence belongs to the GPAT/DAPAT family.

The protein localises to the cell inner membrane. It catalyses the reaction sn-glycerol 3-phosphate + an acyl-CoA = a 1-acyl-sn-glycero-3-phosphate + CoA. The protein operates within phospholipid metabolism; CDP-diacylglycerol biosynthesis; CDP-diacylglycerol from sn-glycerol 3-phosphate: step 1/3. The sequence is that of Glycerol-3-phosphate acyltransferase from Shigella flexneri serotype 5b (strain 8401).